Here is a 286-residue protein sequence, read N- to C-terminus: Energy-coupling factor transporter ATP-binding protein EcfA2 (286 aa).

Residues 3 to 246 (IRFDNVSYTY…KEKLADWHIA (244 aa)) enclose the ABC transporter domain. Residue 40 to 47 (GQTGSGKS) participates in ATP binding.

This sequence belongs to the ABC transporter superfamily. Energy-coupling factor EcfA family. Forms a stable energy-coupling factor (ECF) transporter complex composed of 2 membrane-embedded substrate-binding proteins (S component), 2 ATP-binding proteins (A component) and 2 transmembrane proteins (T component).

Its subcellular location is the cell membrane. Functionally, ATP-binding (A) component of a common energy-coupling factor (ECF) ABC-transporter complex. Unlike classic ABC transporters this ECF transporter provides the energy necessary to transport a number of different substrates. In Staphylococcus aureus (strain bovine RF122 / ET3-1), this protein is Energy-coupling factor transporter ATP-binding protein EcfA2.